Reading from the N-terminus, the 565-residue chain is Mitochondrial distribution and morphology protein 34 (565 aa).

The SMP-LTD domain maps to 1-195 (MAFNFNWSPL…LPAIIHRLSL (195 aa)). Disordered stretches follow at residues 207 to 236 (EDQDQNTNTAGEGPGQDPLASPPQDPVDAL), 296 to 317 (PSDQGDISGGVTSPLSPALSRT), and 348 to 504 (STYG…RQLP). The segment covering 358-370 (RHSKAHARKRKKR) has biased composition (basic residues). Positions 371 to 381 (VVDLRRPKQPE) are enriched in basic and acidic residues. A compositionally biased stretch (polar residues) spans 382–401 (SETASVTDESSFTETTSAPS). 2 stretches are compositionally biased toward basic and acidic residues: residues 446–472 (LRRDIATEMLRETGESSSEPARRHAEV) and 483–496 (IRHEPSRYEGEKQE).

This sequence belongs to the MDM34 family. Component of the ER-mitochondria encounter structure (ERMES) or MDM complex, composed of mmm1, mdm10, mdm12 and mdm34.

It localises to the mitochondrion outer membrane. Component of the ERMES/MDM complex, which serves as a molecular tether to connect the endoplasmic reticulum (ER) and mitochondria. Components of this complex are involved in the control of mitochondrial shape and protein biogenesis, and function in nonvesicular lipid trafficking between the ER and mitochondria. Mdm34 is required for the interaction of the ER-resident membrane protein mmm1 and the outer mitochondrial membrane-resident beta-barrel protein mdm10. In Aspergillus terreus (strain NIH 2624 / FGSC A1156), this protein is Mitochondrial distribution and morphology protein 34.